A 149-amino-acid chain; its full sequence is Transcriptional repressor NrdR (149 aa).

Residues 3-34 (CPFCSATDTKVIDSRLVADGHQVRRRRECAEC) fold into a zinc finger. In terms of domain architecture, ATP-cone spans 49-139 (PRVVKQDGSR…VYRAFEDVSE (91 aa)).

It belongs to the NrdR family. Requires Zn(2+) as cofactor.

Its function is as follows. Negatively regulates transcription of bacterial ribonucleotide reductase nrd genes and operons by binding to NrdR-boxes. This Shewanella woodyi (strain ATCC 51908 / MS32) protein is Transcriptional repressor NrdR.